The chain runs to 491 residues: MEERKVIIKTGLNLENSYTSLPEIFFTRQNPNRVPSPKLAVLNYPLITSLGLNAQVLQSTDGVDILAGNKTPEEAIPISQAYAGHQFGHFTMLGDGRAILLGEHITPQGERFDIQLKGSGKTPYSRGGDGKAALGPMLREYIISEAMNALGIPTTRSLAVVTTGESIMRETELSGAILTRVAASHIRVGTFEYVSRWGTIQELRALADYTLQRHFKKRNDKDNPYLFLLQEVIKKQAELIAKWQLIGFVHGVMNTDNMTISGETIDYGPCAFMDVYDPKTVFSSIDIYGRYAYGNQPNIAAWNLARLAETLLPLLHINPNEAIKIAENAISDFTKLYKNNWLSGMRGKLGIFNEELEDEYLIEDLLSIMHKYGADYTNTFRALTFDNIEDTVLGGKVEFDKWYKLWQERLTRQEESKLSSRQLMKSSNPSVIPRNHRVEEALEAAVKEGDYSVMEKLLDALSKPYAYSKEQDYYSTLPEPSTCSYQTYCGT.

Positions 94, 96, 97, 117, 129, 130, 180, and 187 each coordinate ATP. The Proton acceptor role is filled by Asp256. Asn257 and Asp266 together coordinate Mg(2+). Asp266 is an ATP binding site.

Belongs to the SELO family. The cofactor is Mg(2+). It depends on Mn(2+) as a cofactor.

It carries out the reaction L-seryl-[protein] + ATP = 3-O-(5'-adenylyl)-L-seryl-[protein] + diphosphate. The enzyme catalyses L-threonyl-[protein] + ATP = 3-O-(5'-adenylyl)-L-threonyl-[protein] + diphosphate. It catalyses the reaction L-tyrosyl-[protein] + ATP = O-(5'-adenylyl)-L-tyrosyl-[protein] + diphosphate. The catalysed reaction is L-histidyl-[protein] + UTP = N(tele)-(5'-uridylyl)-L-histidyl-[protein] + diphosphate. It carries out the reaction L-seryl-[protein] + UTP = O-(5'-uridylyl)-L-seryl-[protein] + diphosphate. The enzyme catalyses L-tyrosyl-[protein] + UTP = O-(5'-uridylyl)-L-tyrosyl-[protein] + diphosphate. In terms of biological role, nucleotidyltransferase involved in the post-translational modification of proteins. It can catalyze the addition of adenosine monophosphate (AMP) or uridine monophosphate (UMP) to a protein, resulting in modifications known as AMPylation and UMPylation. This chain is Protein nucleotidyltransferase YdiU, found in Clostridium botulinum (strain Okra / Type B1).